A 541-amino-acid chain; its full sequence is Eukaryotic translation initiation factor 3 subunit L (541 aa).

The PCI domain occupies 308–516 (TFSDILLYIQ…IHIADTKVSH (209 aa)).

Belongs to the eIF-3 subunit L family. As to quaternary structure, component of the eukaryotic translation initiation factor 3 (eIF-3) complex. The eIF-3 complex interacts with pix.

The protein resides in the cytoplasm. Component of the eukaryotic translation initiation factor 3 (eIF-3) complex, which is involved in protein synthesis of a specialized repertoire of mRNAs and, together with other initiation factors, stimulates binding of mRNA and methionyl-tRNAi to the 40S ribosome. The eIF-3 complex specifically targets and initiates translation of a subset of mRNAs involved in cell proliferation. The sequence is that of Eukaryotic translation initiation factor 3 subunit L from Drosophila pseudoobscura pseudoobscura (Fruit fly).